Here is a 1209-residue protein sequence, read N- to C-terminus: Nitric oxide synthase (1209 aa).

(6R)-L-erythro-5,6,7,8-tetrahydrobiopterin is bound at residue Ser103. Residue Cys181 coordinates heme b. Residues Gln244, Trp353, Tyr354, Glu358, and Asn363 each coordinate L-arginine. (6R)-L-erythro-5,6,7,8-tetrahydrobiopterin contacts are provided by Trp444 and Phe457. Position 472 (Tyr472) interacts with heme b. The calmodulin-binding stretch occupies residues 491 to 511 (VHRKFHFKQIARAVKFTSKLF). A Flavodoxin-like domain is found at 521–723 (ATILYATETG…QFRAWSSKIF (203 aa)). 527–531 (TETGK) contributes to the FMN binding site. The interval 603 to 622 (RGDGTSDLGSGTFKTPTPKS) is disordered. 669–700 (VFGLGSSAYPKFCHFGKTVDKILGDLGGERIL) provides a ligand contact to FMN. Residues 776–1021 (KQLITCKVKE…IRRAPSFHMP (246 aa)) enclose the FAD-binding FR-type domain. FAD-binding positions include 811–822 (YDPGDHVGVLAC) and 954–964 (LQPRFYSISSS). NADP(+) contacts are provided by residues 1028 to 1147 (LILV…QQKL) and 1128 to 1143 (NGHF…AEEV).

This sequence belongs to the NOS family. It depends on heme b as a cofactor. FAD is required as a cofactor. FMN serves as cofactor. As to expression, constitutively expressed at a low level in the larval fat body, hemocyte, Malpighian tubule, midgut, silk gland and adult antenna.

It catalyses the reaction 2 L-arginine + 3 NADPH + 4 O2 + H(+) = 2 L-citrulline + 2 nitric oxide + 3 NADP(+) + 4 H2O. Expression is dependent on and stimulated by NADPH, calcium, BH4 and calmodulin. The activity is not dependent on FAD and is not stimulated by its presence. Functionally, produces nitric oxide (NO) which is a messenger molecule with diverse functions throughout the body. Involved in the induction of immune gene expression. This is Nitric oxide synthase from Bombyx mori (Silk moth).